The chain runs to 701 residues: UvrABC system protein B (701 aa).

A Helicase ATP-binding domain is found at 28-188 (RRIRAGERDV…VDVQYTRNDL (161 aa)). 41-48 (GATGTGKS) contacts ATP. The Beta-hairpin signature appears at 94 to 117 (YYDYYQPEAYIAQTDTYIEKDSSI). Residues 432 to 598 (QIDDLIGEIR…PLRKKIADIL (167 aa)) enclose the Helicase C-terminal domain. The interval 606-636 (DDTEAAESVPIGGSGRNSSRGRRAQGEPGRA) is disordered. Residues 656–691 (ADLIKDLTSQMMVAARDLQFELAARFRDEIADLKKE) form the UVR domain.

Belongs to the UvrB family. In terms of assembly, forms a heterotetramer with UvrA during the search for lesions. Interacts with UvrC in an incision complex.

The protein localises to the cytoplasm. The UvrABC repair system catalyzes the recognition and processing of DNA lesions. A damage recognition complex composed of 2 UvrA and 2 UvrB subunits scans DNA for abnormalities. Upon binding of the UvrA(2)B(2) complex to a putative damaged site, the DNA wraps around one UvrB monomer. DNA wrap is dependent on ATP binding by UvrB and probably causes local melting of the DNA helix, facilitating insertion of UvrB beta-hairpin between the DNA strands. Then UvrB probes one DNA strand for the presence of a lesion. If a lesion is found the UvrA subunits dissociate and the UvrB-DNA preincision complex is formed. This complex is subsequently bound by UvrC and the second UvrB is released. If no lesion is found, the DNA wraps around the other UvrB subunit that will check the other stand for damage. The sequence is that of UvrABC system protein B from Mycobacterium ulcerans (strain Agy99).